The following is a 149-amino-acid chain: Large ribosomal subunit protein bL9 (149 aa).

This sequence belongs to the bacterial ribosomal protein bL9 family.

Its function is as follows. Binds to the 23S rRNA. The polypeptide is Large ribosomal subunit protein bL9 (Christiangramia forsetii (strain DSM 17595 / CGMCC 1.15422 / KT0803) (Gramella forsetii)).